The chain runs to 245 residues: Probable 2-phosphosulfolactate phosphatase (245 aa).

This sequence belongs to the ComB family. It depends on Mg(2+) as a cofactor.

The enzyme catalyses (2R)-O-phospho-3-sulfolactate + H2O = (2R)-3-sulfolactate + phosphate. This Synechococcus sp. (strain RCC307) protein is Probable 2-phosphosulfolactate phosphatase.